Here is a 3380-residue protein sequence, read N- to C-terminus: Apolipophorins (3380 aa).

Positions 1 to 21 (MGTPPHIWFLLILAISSGGLS) are cleaved as a signal peptide. In terms of domain architecture, Vitellogenin spans 40–646 (YQKGQTYTYS…SQSSYLPRSV (607 aa)). N-linked (GlcNAc...) asparagine glycosylation is found at Asn-132, Asn-649, Asn-969, Asn-2174, Asn-2851, and Asn-3177. The region spanning 2815–2979 (ATAILLNSHH…NAWKVDAQCA (165 aa)) is the VWFD domain. Cys-2839 and Cys-2978 are oxidised to a cystine.

Post-translationally, cleaved into 2 chains by furin protease. However, prevention of cleavage does not impair its function. N-glycosylated. As to expression, present in brain, hemolymph, fat body and eyes.

It is found in the secreted. Constitutes the major component of lipophorin, which mediates transport for various types of lipids in hemolymph. Acts by forming lipoprotein particles that bind lipoproteins and lipids. May be required for morphogens wingless (wg) and hedgehog (hh) function, possibly by acting as vehicles for the movement of wg and hh. This Locusta migratoria (Migratory locust) protein is Apolipophorins.